Here is a 200-residue protein sequence, read N- to C-terminus: Potassium-transporting ATPase KdpC subunit (200 aa).

The chain crosses the membrane as a helical span at residues 6 to 26; that stretch reads PALVLLILLTLITGIAYPLLT.

The protein belongs to the KdpC family. The system is composed of three essential subunits: KdpA, KdpB and KdpC.

Its subcellular location is the cell inner membrane. Part of the high-affinity ATP-driven potassium transport (or Kdp) system, which catalyzes the hydrolysis of ATP coupled with the electrogenic transport of potassium into the cytoplasm. This subunit acts as a catalytic chaperone that increases the ATP-binding affinity of the ATP-hydrolyzing subunit KdpB by the formation of a transient KdpB/KdpC/ATP ternary complex. The protein is Potassium-transporting ATPase KdpC subunit of Yersinia pseudotuberculosis serotype O:1b (strain IP 31758).